Here is a 334-residue protein sequence, read N- to C-terminus: Ethanol acetyltransferase 1 (334 aa).

Residues 1 to 16 (MFASNVVVLNKRSIRF) constitute a mitochondrion transit peptide. Residues Ser-124, Asp-148, and His-296 each act as charge relay system in the active site.

This sequence belongs to the AB hydrolase superfamily.

The protein localises to the mitochondrion. It carries out the reaction ethanol + acetyl-CoA = ethyl acetate + CoA. It catalyses the reaction acetyl-CoA + H2O = acetate + CoA + H(+). The catalysed reaction is ethyl acetate + H2O = ethanol + acetate + H(+). Functionally, alcohol acetyltransferase that catalyzes the synthesis of ethyl acetate from ethanol and acetyl-CoA. Can also function as a thioesterase by hydrolyzing acetyl-CoA in the absence of ethanol, as well as esterase hydrolyzing ethyl acetate. The chain is Ethanol acetyltransferase 1 (EAT1) from Hanseniaspora uvarum (Yeast).